The chain runs to 128 residues: Translation initiation factor 5A (128 aa).

Hypusine is present on Lys-35.

Belongs to the eIF-5A family.

It is found in the cytoplasm. In terms of biological role, functions by promoting the formation of the first peptide bond. This Methanosarcina barkeri (strain Fusaro / DSM 804) protein is Translation initiation factor 5A.